The following is a 466-amino-acid chain: GVGFKAGVKDYKLTYYTPEYQTLDTDILAAFRVTPQPGVPPEEAGAAVAAESSTGTWTTVWTDGLTSLDRYKGRCYHIEPVSGEENQFIAYVAYPLDLFEEGSVTNMFTSIVGNVFGFKALRALRLEDLRIPTSYIKTFQGPPHGIQVERDKLNKYGRPLLGCTIKPKLGLSAKNYGRAVYECLRGGLDFTKDDENVNSQPFMRWRDRFLFCAEALYKAQAETGEIKGHYLNATAGTCEEMIKRAVFARELGVPIVMHDYLTGGFTANTSLAHYCRDNGLLLHIHRAMHAVLDRQKNHGIHFRVLAKALRMSGGDHIHSGTVVGKLEGERDITLGFVDLLRDDFIEKDRSRGIYFTQPWVSLPGVLPVASGGIHVWHMPALTEIFGDDSVLQFGGGTLGHPWGNPPGAAANRVALEACVQARNQGQDLAREGNEIIRRAAKWSPELSSACEVWKEIKFIFEAMDTL.

N6,N6,N6-trimethyllysine is present on lysine 5. Substrate is bound by residues asparagine 114 and threonine 164. Catalysis depends on lysine 166, which acts as the Proton acceptor. Substrate is bound at residue lysine 168. Mg(2+) contacts are provided by lysine 192, aspartate 194, and glutamate 195. At lysine 192 the chain carries N6-carboxylysine. Histidine 285 functions as the Proton acceptor in the catalytic mechanism. Residues arginine 286, histidine 318, and serine 370 each coordinate substrate.

This sequence belongs to the RuBisCO large chain family. Type I subfamily. Heterohexadecamer of 8 large chains and 8 small chains; disulfide-linked. The disulfide link is formed within the large subunit homodimers. Requires Mg(2+) as cofactor. In terms of processing, the disulfide bond which can form in the large chain dimeric partners within the hexadecamer appears to be associated with oxidative stress and protein turnover.

The protein localises to the plastid. The protein resides in the chloroplast. It catalyses the reaction 2 (2R)-3-phosphoglycerate + 2 H(+) = D-ribulose 1,5-bisphosphate + CO2 + H2O. The enzyme catalyses D-ribulose 1,5-bisphosphate + O2 = 2-phosphoglycolate + (2R)-3-phosphoglycerate + 2 H(+). RuBisCO catalyzes two reactions: the carboxylation of D-ribulose 1,5-bisphosphate, the primary event in carbon dioxide fixation, as well as the oxidative fragmentation of the pentose substrate in the photorespiration process. Both reactions occur simultaneously and in competition at the same active site. The protein is Ribulose bisphosphate carboxylase large chain of Drosera filiformis (Thread-leaved sundew).